The chain runs to 209 residues: Ribosomal RNA large subunit methyltransferase E (209 aa).

Residues Gly63, Trp65, Asp83, Asp99, and Asp124 each contribute to the S-adenosyl-L-methionine site. The active-site Proton acceptor is Lys164.

Belongs to the class I-like SAM-binding methyltransferase superfamily. RNA methyltransferase RlmE family.

It localises to the cytoplasm. It carries out the reaction uridine(2552) in 23S rRNA + S-adenosyl-L-methionine = 2'-O-methyluridine(2552) in 23S rRNA + S-adenosyl-L-homocysteine + H(+). In terms of biological role, specifically methylates the uridine in position 2552 of 23S rRNA at the 2'-O position of the ribose in the fully assembled 50S ribosomal subunit. This chain is Ribosomal RNA large subunit methyltransferase E, found in Shewanella baltica (strain OS223).